Reading from the N-terminus, the 68-residue chain is Molybdenum-pterin-binding protein 3 (68 aa).

The Mop domain occupies 2-68 (SISARNQLKG…IKSTDVMILA (67 aa)).

Its function is as follows. Binds one mole of molybdenum per mole of protein and contains a pterin. The sequence is that of Molybdenum-pterin-binding protein 3 (mopIII) from Clostridium pasteurianum.